Here is a 123-residue protein sequence, read N- to C-terminus: Omega-oxotoxin-Ot1a (123 aa).

The signal sequence occupies residues 1-16 (MKIVLVFVCTLYLAQA). A propeptide spanning residues 17–54 (TYLSEQDVNEVSEFLEALDQANEAASEMVEAAETEEAR) is cleaved from the precursor. Residues 55-122 (DWECLPLHSS…GKINTCDKYK (68 aa)) enclose the Oxytoxin-type inhibitor cystine knot (ICK) domain. 5 disulfide bridges follow: cysteine 58-cysteine 72, cysteine 65-cysteine 77, cysteine 69-cysteine 118, cysteine 71-cysteine 106, and cysteine 79-cysteine 104.

It belongs to the spiderine family. Spiderine subfamily. Post-translationally, mass spectrometry data suggest a carboxylated free C-terminal residue. As to expression, expressed by the venom gland.

Its subcellular location is the secreted. Weak blocker of vertebrate P/Q-, N- and L-type voltage-gated calcium channels (Cav1 and Cav2). Is both paralytic and lethal when injected into lepidopteran larvae. Is not toxic to mice. This chain is Omega-oxotoxin-Ot1a, found in Oxyopes takobius (Lynx spider).